An 880-amino-acid polypeptide reads, in one-letter code: GAS2-like protein 2 (880 aa).

The region spanning Glu-32 to Trp-159 is the Calponin-homology (CH) domain. Residues Arg-180–Pro-200 form a disordered region. The span at Leu-185–Arg-198 shows a compositional bias: pro residues. Positions Cys-201 to Arg-273 constitute a GAR domain. 4 disordered regions span residues Ser-283–Phe-360, Trp-372–Pro-437, Glu-489–Arg-533, and Ala-676–Val-880. The span at Gly-301–Gln-315 shows a compositional bias: polar residues. The interaction with ADORA2A stretch occupies residues Gln-438–Val-880. The span at Arg-506–Pro-515 shows a compositional bias: pro residues. Over residues Gln-725–Ala-734 the composition is skewed to polar residues. Basic residues-rich tracts occupy residues Lys-757–Arg-767 and Leu-774–Asp-785.

It belongs to the GAS2 family. As to quaternary structure, interacts with ADORA2A (via its cytoplasmic C-terminal domain). Interacts with GNAS, GNAL, GNAQ, and GNA13. Interacts with MAPRE1. Expressed in bronchial and nasal epithelial cells (at protein level). Expressed in brain, kidney, lung, testis, fallopian tubes, and skeletal muscle. Expressed at low levels in stomach and colon.

It localises to the cytoplasm. It is found in the cytoskeleton. The protein resides in the cell membrane. Its subcellular location is the stress fiber. The protein localises to the cilium basal body. Involved in the cross-linking of microtubules and microfilaments. Regulates microtubule dynamics and stability by interacting with microtubule plus-end tracking proteins, such as MAPRE1, to regulate microtubule growth along actin stress fibers. Enhances ADORA2-mediated adenylyl cyclase activation by acting as a scaffold to recruit trimeric G-protein complexes to ADORA2A. Regulates ciliary orientation and performance in cells located in the airway. This is GAS2-like protein 2 (GAS2L2) from Homo sapiens (Human).